Consider the following 472-residue polypeptide: MATKCTKCGPGYPTPLEAMKGPREEIVYLPCIYRNTGTEAPDYLATVDVDPKSPQYSQVIHRLPMPYLKDELHHSGWNTCSSCFGDSTKSRNKLILPGLISSRIYVVDVGSEPRAPKLHKVIEASEIQAKCNVSNTHTSHCLASGEVMVNTLGDLQGNGKGSFVLLDGETFEVKGTWEKPGGASPMGYDFWYQPRHNVMVSTEWAAPNVFKDGFNPAHVEAGLYGSRIFVWDWQRHEIIQTLQMTDGLIPLEIRFLHDPSATQGFVGCALSSNIQRFYKNEEGTWSVEKVIQVPSKKVKGWMLPEMPGLITDILLSLDDRFLYFSNWLHGDIRQYDISNPQKPRLTGQIFLGGSIVRGGSVQVLEDQELTCQPEPLVVKGKRIPGGPQMIQLSLDGKRLYATTSLYSDWDKQFYPDLIREGSVMLQVDVDTVNGGLKLNPNFLVDFGKEPLGPALAHELRYPGGDCSSDIWI.

Serine 467 bears the Phosphoserine mark.

Belongs to the selenium-binding protein family. Post-translationally, the N-terminus is blocked. As to expression, mainly expressed in liver.

It localises to the nucleus. It is found in the cytoplasm. Its subcellular location is the cytosol. The protein resides in the membrane. Its function is as follows. Selenium- and acetaminophen-binding protein which may be involved in the sensing of reactive xenobiotics in the cytoplasm. May be involved in intra-Golgi protein transport. This chain is Selenium-binding protein 2 (Selenbp2), found in Mus musculus (Mouse).